The chain runs to 308 residues: SAP30-binding protein (308 aa).

A disordered region spans residues Ala15–Leu101. A compositionally biased stretch (acidic residues) spans Glu16–Ala26. 4 positions are modified to phosphoserine: Ser18, Ser22, Ser43, and Ser52. Over residues Asp57–Glu78 the composition is skewed to acidic residues. Residues Thr79–Gln99 show a composition bias toward basic and acidic residues. Residue Lys95 forms a Glycyl lysine isopeptide (Lys-Gly) (interchain with G-Cter in SUMO2) linkage. Position 113 is a phosphoserine (Ser113). Residues Lys220, Lys304, and Lys305 each participate in a glycyl lysine isopeptide (Lys-Gly) (interchain with G-Cter in SUMO2) cross-link.

It belongs to the HCNGP family. Interacts with histone deacetylase complex subunit SAP30.

It is found in the nucleus. Plays a role in transcriptional repression by promoting histone deacetylase activity, leading to deacetylation of histone H3. May be involved in the regulation of beta-2-microglobulin genes. Its function is as follows. (Microbial infection) Involved in transcriptional repression of HHV-1 genes TK and gC. This chain is SAP30-binding protein, found in Homo sapiens (Human).